The primary structure comprises 247 residues: 3-deoxy-manno-octulosonate cytidylyltransferase (247 aa).

The protein belongs to the KdsB family.

Its subcellular location is the cytoplasm. It catalyses the reaction 3-deoxy-alpha-D-manno-oct-2-ulosonate + CTP = CMP-3-deoxy-beta-D-manno-octulosonate + diphosphate. The protein operates within nucleotide-sugar biosynthesis; CMP-3-deoxy-D-manno-octulosonate biosynthesis; CMP-3-deoxy-D-manno-octulosonate from 3-deoxy-D-manno-octulosonate and CTP: step 1/1. It functions in the pathway bacterial outer membrane biogenesis; lipopolysaccharide biosynthesis. In terms of biological role, activates KDO (a required 8-carbon sugar) for incorporation into bacterial lipopolysaccharide in Gram-negative bacteria. The protein is 3-deoxy-manno-octulosonate cytidylyltransferase of Chlorobium limicola (strain DSM 245 / NBRC 103803 / 6330).